The primary structure comprises 95 residues: Small ribosomal subunit protein bS18 (95 aa).

Belongs to the bacterial ribosomal protein bS18 family. Part of the 30S ribosomal subunit. Forms a tight heterodimer with protein bS6.

In terms of biological role, binds as a heterodimer with protein bS6 to the central domain of the 16S rRNA, where it helps stabilize the platform of the 30S subunit. The sequence is that of Small ribosomal subunit protein bS18 from Acidiphilium cryptum (strain JF-5).